Consider the following 320-residue polypeptide: TPR repeat-containing protein MJ0263 (320 aa).

TPR repeat units follow at residues 12 to 45 (ILKDVVNALECADKGNFDKALEYLEKAQKVDKDN), 46 to 79 (PLVLYVKGIVLKLKGDMEKAEKYFECLENIEGTS), 80 to 113 (LLSLGNLICLTFVKGEYERTLKYIEKLSRLSKPC), 114 to 147 (YLSPFHKALIYIEFGEFEKALEALDEFLKIYPNL), 148 to 181 (TSILRQKASILEILGKLDEALDCVNKILSIKKDD), 182 to 215 (AHAWYLKGRILKKLGNIKEALDALKMAINLNENL), 216 to 249 (VHVYKDIAYLELANNNYEEALNYITKYLEKFPND), 250 to 283 (VEAKFYLALIYENLNKVDDALKIYDKIISNKNVK), and 289 to 320 (KSSILNKARILEKLGKIEEAVETYNKAFDNNI).

This chain is TPR repeat-containing protein MJ0263, found in Methanocaldococcus jannaschii (strain ATCC 43067 / DSM 2661 / JAL-1 / JCM 10045 / NBRC 100440) (Methanococcus jannaschii).